Reading from the N-terminus, the 63-residue chain is Beta-defensin 4 (63 aa).

The first 22 residues, 1-22 (MRLHHLLLAVLFLVLSAGSGFT), serve as a signal peptide directing secretion. At Gln23 the chain carries Pyrrolidone carboxylic acid. Intrachain disulfides connect Cys31/Cys60, Cys38/Cys53, and Cys43/Cys61.

This sequence belongs to the beta-defensin family. As to expression, neutrophilic granules.

It localises to the secreted. Has bactericidal activity. Active against E.coli ML35 and S.aureus 502A. This chain is Beta-defensin 4 (DEFB4), found in Bos taurus (Bovine).